We begin with the raw amino-acid sequence, 483 residues long: Low-density lipoprotein receptor-related protein 11 (483 aa).

An N-terminal signal peptide occupies residues 1-32 (MATRGGGPGPGFRHRALRGLLLLCLWLPGSRP). The Extracellular segment spans residues 33-433 (GEPAAPSSGV…GGEHPAPEAG (401 aa)). Positions 85-172 (AVPDTIIRTQ…FAPLRGYRTY (88 aa)) constitute an MANSC domain. N-linked (GlcNAc...) asparagine glycans are attached at residues Asn152 and Asn275. Residues 193–287 (PVSKAGKDVV…VTVLPRPYST (95 aa)) form the PKD domain. The LDL-receptor class A domain occupies 293–329 (ACSRYHFFCDSGCCIDIALACDGVRQCPDGSDEDFCQ). Disulfide bonds link Cys294–Cys306, Cys301–Cys319, and Cys313–Cys328. Residues 346–428 (AQPGAMGLNE…KSGQAGGEHP (83 aa)) are disordered. Composition is skewed to polar residues over residues 367–376 (RATTHNQPAT) and 385–407 (HSTQ…SSGK). Asn403 is a glycosylation site (N-linked (GlcNAc...) asparagine). Residues 408–418 (NQEEGNYDLKS) show a composition bias toward basic and acidic residues. The helical transmembrane segment at 434-456 (AVLPLALGLAITVLLLLMVTCRL) threads the bilayer. The Cytoplasmic segment spans residues 457–483 (RLVKQKLKKARPITSEESDYLINGMYL). Ser474 carries the phosphoserine modification.

It belongs to the LDLR family.

Its subcellular location is the membrane. The polypeptide is Low-density lipoprotein receptor-related protein 11 (Lrp11) (Mus musculus (Mouse)).